A 681-amino-acid polypeptide reads, in one-letter code: Oligopeptidase A (681 aa).

H470 serves as a coordination point for Zn(2+). E471 is a catalytic residue. Residues H474 and H477 each coordinate Zn(2+).

The protein belongs to the peptidase M3 family. The cofactor is Zn(2+).

The catalysed reaction is Hydrolysis of oligopeptides, with broad specificity. Gly or Ala commonly occur as P1 or P1' residues, but more distant residues are also important, as is shown by the fact that Z-Gly-Pro-Gly-|-Gly-Pro-Ala is cleaved, but not Z-(Gly)(5).. Functionally, may play a specific role in the degradation of signal peptides after they are released from precursor forms of secreted proteins. Can cleave N-acetyl-L-Ala(4). This Haemophilus influenzae (strain ATCC 51907 / DSM 11121 / KW20 / Rd) protein is Oligopeptidase A (prlC).